The chain runs to 276 residues: Putative oxidoreductase SadH (276 aa).

Ser142 provides a ligand contact to substrate. Tyr155 acts as the Proton acceptor in catalysis.

Belongs to the short-chain dehydrogenases/reductases (SDR) family.

In terms of biological role, required for maintaining the appropriate mycolic acid composition and permeability of the envelope on its exposure to acidic pH. The chain is Putative oxidoreductase SadH (sadH) from Mycobacterium tuberculosis (strain CDC 1551 / Oshkosh).